The following is a 180-amino-acid chain: MANRLKEKYTNEVIPALTEQFNYSSVMAVPKVDKIVINMGVGEAVNNAKTLEKAAAELALISGQKPLITKAKKSIAGFRLREGVAIGAKVTLRGERMYEFLDKLVSVSLPRVRDFHGVPTKSFDGRGNYTLGVKEQLIFPEINFDNVDKVRGMDIVIVTTANTDEEGRELLKGLGMPFAK.

This sequence belongs to the universal ribosomal protein uL5 family. In terms of assembly, part of the 50S ribosomal subunit; part of the 5S rRNA/L5/L18/L25 subcomplex. Contacts the 5S rRNA and the P site tRNA. Forms a bridge to the 30S subunit in the 70S ribosome.

Its function is as follows. This is one of the proteins that bind and probably mediate the attachment of the 5S RNA into the large ribosomal subunit, where it forms part of the central protuberance. In the 70S ribosome it contacts protein S13 of the 30S subunit (bridge B1b), connecting the 2 subunits; this bridge is implicated in subunit movement. Contacts the P site tRNA; the 5S rRNA and some of its associated proteins might help stabilize positioning of ribosome-bound tRNAs. The polypeptide is Large ribosomal subunit protein uL5 (Streptococcus thermophilus (strain CNRZ 1066)).